The primary structure comprises 366 residues: Transcription initiation factor IIA subunit 1 (366 aa).

3 disordered regions span residues 56-82 (LSPD…AANA), 133-162 (EVNS…SSGQ), and 257-317 (QLDG…DSAE). Over residues 146-162 (SAASMMQKQQQAASSGQ) the composition is skewed to low complexity. Positions 264–317 (SSDEDESEESDDNIDNDDDDDLDKDDDEDAEHEDAAEEEPLNSEDDVTDEDSAE) are enriched in acidic residues. A phosphoserine; by TAF1 mark is found at serine 265 and serine 306.

Belongs to the TFIIA subunit 1 family. As to quaternary structure, belongs to the TFIID complex which is composed of TATA binding protein (Tbp) and a number of TBP-associated factors (Tafs). TFIIA is a heterodimer of a unprocessed large subunit 1 and a small subunit gamma. It was originally believed to be a heterotrimer of an alpha (p30), a beta (p20) and a gamma subunit (p14). Interacts with Tbp. Taf4 interacts with TFIIA-L when TFIIA-L is in complex with Tbp. Post-translationally, the precursor form (48 kDa) is cleaved to give rise to the alpha (30 kDa) and beta (20 kDa) subunits.

It localises to the nucleus. In terms of biological role, TFIIA is a component of the transcription machinery of RNA polymerase II and plays an important role in transcriptional activation. TFIIA in a complex with TBP mediates transcriptional activity. The protein is Transcription initiation factor IIA subunit 1 (TfIIA-L) of Drosophila melanogaster (Fruit fly).